Reading from the N-terminus, the 542-residue chain is Probable quinate permease (542 aa).

The Cytoplasmic segment spans residues 1–22; sequence MSILALVEDRPTPKEVYNWKIY. Residues 23–43 traverse the membrane as a helical segment; that stretch reads LLAAVASFTSCMIGYDSAFIG. At 44–74 the chain is on the extracellular side; sequence TTLALSSFREEFGFSTMSKTAVNLVSANIVS. Residues 75–95 traverse the membrane as a helical segment; sequence CYQAGAFFGAFFAYPIGHFWG. Residues 96–97 are Cytoplasmic-facing; it reads RK. A helical transmembrane segment spans residues 98-118; that stretch reads WGLLFAGTIFTLGAGLMLGAN. Topologically, residues 119 to 130 are extracellular; sequence GDRGLGLLYGGR. Residues 131 to 151 traverse the membrane as a helical segment; the sequence is VLAGLGVGAGSNITPIYISEM. The Cytoplasmic portion of the chain corresponds to 152–159; the sequence is APPSIRGR. Residues 160-180 traverse the membrane as a helical segment; it reads LVGVYELGWQIGGLVGFWINY. The Extracellular segment spans residues 181–193; that stretch reads GVSETLAPSHKQW. Residues 194-214 traverse the membrane as a helical segment; the sequence is IIPFAVQLIPSGLLLIGAVFL. The Cytoplasmic portion of the chain corresponds to 215–285; sequence KESPRWLFSR…AGTNKKVMYR (71 aa). The helical transmembrane segment at 286 to 306 threads the bilayer; sequence LFLGSMLFFWQNGSGINAINY. The Extracellular segment spans residues 307 to 325; sequence YSPTVFKSIGLHGANTSMF. A helical membrane pass occupies residues 326-346; the sequence is STGIFGVVKTVVTFVWLLYLI. Over 347 to 352 the chain is Cytoplasmic; it reads DRLGRR. A helical transmembrane segment spans residues 353–373; it reads LLLLIGAAGAAVCLLIVGAYI. Over 374–387 the chain is Extracellular; that stretch reads KIADPASNPTQEMT. A helical membrane pass occupies residues 388–408; sequence GGGIAAMFFFYLYTVFYTPSW. Over 409–456 the chain is Cytoplasmic; that stretch reads NGTPWVMNSEMFEPNMRSLAQACAAASNWLWNFLISRFTPQMFAKMEY. The helical transmembrane segment at 457-477 threads the bilayer; the sequence is GVWFFFASLMLLSIVFVFFLV. The Extracellular portion of the chain corresponds to 478 to 542; the sequence is PETKGIPLES…EHVSEDLPKV (65 aa). The disordered stretch occupies residues 523-542; the sequence is GYSKTGEQQVEHVSEDLPKV. The segment covering 531–542 has biased composition (basic and acidic residues); the sequence is QVEHVSEDLPKV.

The protein belongs to the major facilitator superfamily. Sugar transporter (TC 2.A.1.1) family. Interacts with creB. Ubiquitinated. Deubiquitinated by creB, probably to control its activity or amount.

It is found in the cell membrane. In terms of biological role, integral membrane transporter that imports quinic acid to be catabolized as a carbon source. The polypeptide is Probable quinate permease (qutD) (Aspergillus fumigatus (strain CBS 144.89 / FGSC A1163 / CEA10) (Neosartorya fumigata)).